The chain runs to 205 residues: UPF0548 protein At2g17695 (205 aa).

It belongs to the UPF0548 family.

The polypeptide is UPF0548 protein At2g17695 (Arabidopsis thaliana (Mouse-ear cress)).